The chain runs to 329 residues: Ketol-acid reductoisomerase (NADP(+)) (329 aa).

Residues 2–182 (ARMYYEKDVD…GATRAGVLET (181 aa)) form the KARI N-terminal Rossmann domain. NADP(+)-binding positions include 25–28 (YGSQ), Ser-51, Ser-53, and 83–86 (DEKQ). His-108 is an active-site residue. Residue Gly-134 participates in NADP(+) binding. The 146-residue stretch at 183–328 (TFKEETETDL…RNLRSMMSFL (146 aa)) folds into the KARI C-terminal knotted domain. Mg(2+) contacts are provided by Asp-191, Glu-195, Glu-227, and Glu-231. Ser-252 provides a ligand contact to substrate.

It belongs to the ketol-acid reductoisomerase family. It depends on Mg(2+) as a cofactor.

The enzyme catalyses (2R)-2,3-dihydroxy-3-methylbutanoate + NADP(+) = (2S)-2-acetolactate + NADPH + H(+). It catalyses the reaction (2R,3R)-2,3-dihydroxy-3-methylpentanoate + NADP(+) = (S)-2-ethyl-2-hydroxy-3-oxobutanoate + NADPH + H(+). The protein operates within amino-acid biosynthesis; L-isoleucine biosynthesis; L-isoleucine from 2-oxobutanoate: step 2/4. It functions in the pathway amino-acid biosynthesis; L-valine biosynthesis; L-valine from pyruvate: step 2/4. In terms of biological role, involved in the biosynthesis of branched-chain amino acids (BCAA). Catalyzes an alkyl-migration followed by a ketol-acid reduction of (S)-2-acetolactate (S2AL) to yield (R)-2,3-dihydroxy-isovalerate. In the isomerase reaction, S2AL is rearranged via a Mg-dependent methyl migration to produce 3-hydroxy-3-methyl-2-ketobutyrate (HMKB). In the reductase reaction, this 2-ketoacid undergoes a metal-dependent reduction by NADPH to yield (R)-2,3-dihydroxy-isovalerate. The protein is Ketol-acid reductoisomerase (NADP(+)) of Clostridioides difficile (strain 630) (Peptoclostridium difficile).